The primary structure comprises 355 residues: Beta-ketoacyl-[acyl-carrier-protein] synthase III (355 aa).

Residues Cys-122 and His-280 contribute to the active site. Positions 281–285 (QANMR) are ACP-binding. Residue Asn-311 is part of the active site.

Belongs to the thiolase-like superfamily. FabH family. Homodimer.

The protein resides in the cytoplasm. It carries out the reaction malonyl-[ACP] + acetyl-CoA + H(+) = 3-oxobutanoyl-[ACP] + CO2 + CoA. It functions in the pathway lipid metabolism; fatty acid biosynthesis. Its function is as follows. Catalyzes the condensation reaction of fatty acid synthesis by the addition to an acyl acceptor of two carbons from malonyl-ACP. Catalyzes the first condensation reaction which initiates fatty acid synthesis and may therefore play a role in governing the total rate of fatty acid production. Possesses both acetoacetyl-ACP synthase and acetyl transacylase activities. Its substrate specificity determines the biosynthesis of branched-chain and/or straight-chain of fatty acids. This chain is Beta-ketoacyl-[acyl-carrier-protein] synthase III, found in Kocuria rhizophila (strain ATCC 9341 / DSM 348 / NBRC 103217 / DC2201).